The primary structure comprises 258 residues: Ribosomal RNA small subunit methyltransferase J (258 aa).

S-adenosyl-L-methionine is bound by residues 123-124 (ER) and D177. The segment at 232–258 (IDGPKPSHSLEGKSSRYDIYPKKALKA) is disordered. Basic and acidic residues predominate over residues 239 to 252 (HSLEGKSSRYDIYP).

Belongs to the methyltransferase superfamily. RsmJ family.

It is found in the cytoplasm. The catalysed reaction is guanosine(1516) in 16S rRNA + S-adenosyl-L-methionine = N(2)-methylguanosine(1516) in 16S rRNA + S-adenosyl-L-homocysteine + H(+). Its function is as follows. Specifically methylates the guanosine in position 1516 of 16S rRNA. This is Ribosomal RNA small subunit methyltransferase J from Pseudomonas putida (strain W619).